Consider the following 135-residue polypeptide: Aspartate 1-decarboxylase (135 aa).

Catalysis depends on S25, which acts as the Schiff-base intermediate with substrate; via pyruvic acid. S25 carries the pyruvic acid (Ser) modification. T57 provides a ligand contact to substrate. The active-site Proton donor is Y58. 73-75 (GSA) provides a ligand contact to substrate.

Belongs to the PanD family. As to quaternary structure, heterooctamer of four alpha and four beta subunits. It depends on pyruvate as a cofactor. Post-translationally, is synthesized initially as an inactive proenzyme, which is activated by self-cleavage at a specific serine bond to produce a beta-subunit with a hydroxyl group at its C-terminus and an alpha-subunit with a pyruvoyl group at its N-terminus.

It localises to the cytoplasm. It catalyses the reaction L-aspartate + H(+) = beta-alanine + CO2. It participates in cofactor biosynthesis; (R)-pantothenate biosynthesis; beta-alanine from L-aspartate: step 1/1. Functionally, catalyzes the pyruvoyl-dependent decarboxylation of aspartate to produce beta-alanine. The chain is Aspartate 1-decarboxylase from Albidiferax ferrireducens (strain ATCC BAA-621 / DSM 15236 / T118) (Rhodoferax ferrireducens).